We begin with the raw amino-acid sequence, 91 residues long: UPF0147 protein DKAM_0139 (91 aa).

Belongs to the UPF0147 family.

The protein is UPF0147 protein DKAM_0139 of Desulfurococcus amylolyticus (strain DSM 18924 / JCM 16383 / VKM B-2413 / 1221n) (Desulfurococcus kamchatkensis).